Consider the following 163-residue polypeptide: Nucleotide-binding protein CGSHiGG_08790 (163 aa).

Belongs to the YajQ family.

Nucleotide-binding protein. This Haemophilus influenzae (strain PittGG) protein is Nucleotide-binding protein CGSHiGG_08790.